The chain runs to 712 residues: NADH-quinone oxidoreductase subunit L (712 aa).

The next 17 membrane-spanning stretches (helical) occupy residues 4–24, 28–48, 79–99, 113–133, 138–158, 183–203, 216–236, 256–276, 290–310, 325–345, 346–366, 385–405, 421–441, 475–495, 588–608, 655–675, and 686–706; these read IILL…RLIT, ALVV…VVFL, LTAI…LYSW, AYKA…LMLV, LVQM…LIGF, FALG…DVIF, FLAW…IGAM, TPVS…FLVC, MMVV…GLVQ, LGYM…FHLL, THAF…HAMH, FAIM…FFSI, IIES…VAAA, AVML…GMVW, LSPF…YIGD, GDGA…IPFF, and YLFH…FWVV.

The protein belongs to the complex I subunit 5 family. In terms of assembly, NDH-1 is composed of 14 different subunits. Subunits NuoA, H, J, K, L, M, N constitute the membrane sector of the complex.

It is found in the cellular chromatophore membrane. It catalyses the reaction a quinone + NADH + 5 H(+)(in) = a quinol + NAD(+) + 4 H(+)(out). Its function is as follows. NDH-1 shuttles electrons from NADH, via FMN and iron-sulfur (Fe-S) centers, to quinones in the respiratory chain. The immediate electron acceptor for the enzyme in this species is believed to be ubiquinone. Couples the redox reaction to proton translocation (for every two electrons transferred, four hydrogen ions are translocated across the cytoplasmic membrane), and thus conserves the redox energy in a proton gradient. The chain is NADH-quinone oxidoreductase subunit L (nuoL) from Rhodobacter capsulatus (Rhodopseudomonas capsulata).